The primary structure comprises 243 residues: Phosphoadenosine 5'-phosphosulfate reductase (243 aa).

Residue C239 is the Nucleophile; cysteine thiosulfonate intermediate of the active site.

This sequence belongs to the PAPS reductase family. CysH subfamily.

The protein resides in the cytoplasm. It catalyses the reaction [thioredoxin]-disulfide + sulfite + adenosine 3',5'-bisphosphate + 2 H(+) = [thioredoxin]-dithiol + 3'-phosphoadenylyl sulfate. Its pathway is sulfur metabolism; hydrogen sulfide biosynthesis; sulfite from sulfate: step 3/3. Its function is as follows. Catalyzes the formation of sulfite from phosphoadenosine 5'-phosphosulfate (PAPS) using thioredoxin as an electron donor. This Erwinia tasmaniensis (strain DSM 17950 / CFBP 7177 / CIP 109463 / NCPPB 4357 / Et1/99) protein is Phosphoadenosine 5'-phosphosulfate reductase.